Reading from the N-terminus, the 71-residue chain is MIPVRCFTCGKVISEVWEEYKARVEERKMNLQHGEVLKVGDILDDLGVERYCCRRMLLSHVELVDVLAPYQ.

Zn(2+) is bound by residues C6, C9, C52, and C53.

The protein belongs to the archaeal Rpo10/eukaryotic RPB10 RNA polymerase subunit family. As to quaternary structure, part of the RNA polymerase complex. The cofactor is Zn(2+).

The protein resides in the cytoplasm. The enzyme catalyses RNA(n) + a ribonucleoside 5'-triphosphate = RNA(n+1) + diphosphate. Its function is as follows. DNA-dependent RNA polymerase (RNAP) catalyzes the transcription of DNA into RNA using the four ribonucleoside triphosphates as substrates. The protein is DNA-directed RNA polymerase subunit Rpo10 of Methanocella arvoryzae (strain DSM 22066 / NBRC 105507 / MRE50).